The sequence spans 217 residues: RNA chaperone ProQ (217 aa).

The disordered stretch occupies residues 105 to 166 (EAKARVQAQR…PREEQHTPVS (62 aa)). Positions 121 to 131 (KRERKPRPTTP) are enriched in basic residues. Residues 132–162 (RRKEGAERKPRAQKPVEKAPKTVKAPREEQH) are compositionally biased toward basic and acidic residues.

The protein belongs to the ProQ family.

Its subcellular location is the cytoplasm. RNA chaperone with significant RNA binding, RNA strand exchange and RNA duplexing activities. May regulate ProP activity through an RNA-based, post-transcriptional mechanism. This is RNA chaperone ProQ from Escherichia coli O8 (strain IAI1).